The following is an 89-amino-acid chain: Small ribosomal subunit protein uS15 (89 aa).

Belongs to the universal ribosomal protein uS15 family. In terms of assembly, part of the 30S ribosomal subunit. Forms a bridge to the 50S subunit in the 70S ribosome, contacting the 23S rRNA.

Its function is as follows. One of the primary rRNA binding proteins, it binds directly to 16S rRNA where it helps nucleate assembly of the platform of the 30S subunit by binding and bridging several RNA helices of the 16S rRNA. In terms of biological role, forms an intersubunit bridge (bridge B4) with the 23S rRNA of the 50S subunit in the ribosome. The protein is Small ribosomal subunit protein uS15 of Pseudomonas fluorescens (strain Pf0-1).